Reading from the N-terminus, the 433-residue chain is Protein slt1 (433 aa).

Disordered regions lie at residues 159-184 (SPEESSESQAEVADQQTGPYSTSEYA), 200-234 (NAPEQQSGPDVAELNTLPNRSKTSSQASVSDEELS), and 252-433 (SNKR…DEDA). Polar residues-rich tracts occupy residues 172-184 (DQQTGPYSTSEYA) and 215-228 (TLPNRSKTSSQASV). 3 positions are modified to phosphoserine: Ser227, Ser229, and Ser269. Basic and acidic residues predominate over residues 343–353 (IDTKAGEKLTD). The span at 385 to 421 (EGSNNHEQGSFNEPKSNVDSNDSASPKRPSSQASLRH) shows a compositional bias: polar residues. Phosphoserine occurs at positions 409, 415, and 418.

This Schizosaccharomyces pombe (strain 972 / ATCC 24843) (Fission yeast) protein is Protein slt1 (slt1).